The chain runs to 446 residues: Minor teichoic acid biosynthesis protein GgaA (446 aa).

Belongs to the glycosyltransferase 2 family.

It functions in the pathway cell wall biogenesis; poly(glucopyranosyl N-acetylgalactosamine 1-phosphate) teichoic acid biosynthesis. Involved in the biosynthesis of galactosamine-containing minor teichoic acid, a non-essential cell wall polymer in B.subtilis 168. This is Minor teichoic acid biosynthesis protein GgaA (ggaA) from Bacillus subtilis (strain 168).